Here is a 191-residue protein sequence, read N- to C-terminus: Ribonuclease M5 (191 aa).

The region spanning 8–91 is the Toprim domain; that stretch reads HEFIVVEGRD…AFINRQDALP (84 aa). 3 residues coordinate Mg(2+): Glu14, Asp60, and Asp62.

This sequence belongs to the ribonuclease M5 family. Mg(2+) is required as a cofactor.

The protein localises to the cytoplasm. The catalysed reaction is Endonucleolytic cleavage of RNA, removing 21 and 42 nucleotides, respectively, from the 5'- and 3'-termini of a 5S-rRNA precursor.. Its function is as follows. Required for correct processing of both the 5' and 3' ends of 5S rRNA precursor. Cleaves both sides of a double-stranded region yielding mature 5S rRNA in one step. The sequence is that of Ribonuclease M5 from Listeria monocytogenes serovar 1/2a (strain ATCC BAA-679 / EGD-e).